Here is a 387-residue protein sequence, read N- to C-terminus: 3-ketoacyl-CoA thiolase (387 aa).

The active-site Acyl-thioester intermediate is Cys-91. Active-site proton acceptor residues include His-343 and Cys-373.

It belongs to the thiolase-like superfamily. Thiolase family. As to quaternary structure, heterotetramer of two alpha chains (FadB) and two beta chains (FadA).

It localises to the cytoplasm. The enzyme catalyses an acyl-CoA + acetyl-CoA = a 3-oxoacyl-CoA + CoA. Its pathway is lipid metabolism; fatty acid beta-oxidation. Catalyzes the final step of fatty acid oxidation in which acetyl-CoA is released and the CoA ester of a fatty acid two carbons shorter is formed. This Erwinia tasmaniensis (strain DSM 17950 / CFBP 7177 / CIP 109463 / NCPPB 4357 / Et1/99) protein is 3-ketoacyl-CoA thiolase.